The chain runs to 202 residues: Recombination protein RecR (202 aa).

A C4-type zinc finger spans residues 61-76 (CARCNSFTEDEVCATC). In terms of domain architecture, Toprim spans 84–179 (GLLCIVETPA…KVTRLARGVP (96 aa)).

This sequence belongs to the RecR family.

Its function is as follows. May play a role in DNA repair. It seems to be involved in an RecBC-independent recombinational process of DNA repair. It may act with RecF and RecO. The sequence is that of Recombination protein RecR from Bordetella bronchiseptica (strain ATCC BAA-588 / NCTC 13252 / RB50) (Alcaligenes bronchisepticus).